A 130-amino-acid chain; its full sequence is Sec-independent protein translocase protein TatB (130 aa).

Residues 1-21 (MFDISFTELIVIGIVALVVIG) traverse the membrane as a helical segment. Positions 70 to 130 (VDSFQNSVHS…TPKEPRQSGS (61 aa)) are disordered. 2 stretches are compositionally biased toward basic and acidic residues: residues 80–89 (EINKIQETAD) and 96–111 (PEKE…KTEP).

This sequence belongs to the TatB family. As to quaternary structure, the Tat system comprises two distinct complexes: a TatABC complex, containing multiple copies of TatA, TatB and TatC subunits, and a separate TatA complex, containing only TatA subunits. Substrates initially bind to the TatABC complex, which probably triggers association of the separate TatA complex to form the active translocon.

The protein resides in the cell inner membrane. Part of the twin-arginine translocation (Tat) system that transports large folded proteins containing a characteristic twin-arginine motif in their signal peptide across membranes. Together with TatC, TatB is part of a receptor directly interacting with Tat signal peptides. TatB may form an oligomeric binding site that transiently accommodates folded Tat precursor proteins before their translocation. The protein is Sec-independent protein translocase protein TatB of Nitrosomonas eutropha (strain DSM 101675 / C91 / Nm57).